A 1045-amino-acid chain; its full sequence is Pre-mRNA-splicing factor ATP-dependent RNA helicase DHX16 (1045 aa).

The segment at 101–211 (EDSEESSEEA…ERSDKKAYEE (111 aa)) is disordered. 3 positions are modified to phosphoserine: serine 103, serine 106, and serine 107. Positions 119 to 131 (QKKRKKRKHLRKK) are enriched in basic residues. Residues 135 to 144 (EEEEEEEEEV) are compositionally biased toward acidic residues. Serine 164 carries the phosphoserine modification. Residues 170–211 (RTERERLQDLEERDAFAERVRQRDKDRTRNVLERSDKKAYEE) are compositionally biased toward basic and acidic residues. Positions 413–577 (LAAVANHQIL…FDDAPVFRIP (165 aa)) constitute a Helicase ATP-binding domain. 426-433 (GETGSGKT) is a binding site for ATP. Residues 524–527 (DEAH) carry the DEAH box motif. Positions 602-775 (SVLQIHVTQP…NVVLLLKSLG (174 aa)) constitute a Helicase C-terminal domain. Threonine 716 is subject to Phosphothreonine. A disordered region spans residues 1026–1045 (EDPHAKKMPKKTGKTREELG).

It belongs to the DEAD box helicase family. DEAH subfamily. DDX16/PRP8 sub-subfamily. As to quaternary structure, component of pre-catalytic spliceosome complexes. Component of the minor spliceosome, which splices U12-type introns. Interacts with GPKOW. Interacts with TRIM6. Interacts with RIGI.

The protein localises to the nucleus. It localises to the nucleoplasm. Its subcellular location is the cytoplasm. It catalyses the reaction ATP + H2O = ADP + phosphate + H(+). Functionally, required for pre-mRNA splicing as a component of the spliceosome. Contributes to pre-mRNA splicing after spliceosome formation and prior to the first transesterification reaction. As a component of the minor spliceosome, involved in the splicing of U12-type introns in pre-mRNAs. Also plays a role in innate antiviral response by acting as a pattern recognition receptor sensing splicing signals in viral RNA. Mechanistically, TRIM6 promotes the interaction between unanchored 'Lys-48'-polyubiquitin chains and DHX16, leading to DHX16 interaction with RIGI and ssRNA to amplify RIGI-dependent innate antiviral immune responses. The polypeptide is Pre-mRNA-splicing factor ATP-dependent RNA helicase DHX16 (DHX16) (Sus scrofa (Pig)).